The following is a 98-amino-acid chain: MTPTYMNIMLAFTISLLGMLTYRSHLVASLLCLEGMMMSLFIMATLIASNTHFPLVNIMPIILLVFAACETAVGLALLISISNTYGLDYVHNLNLLQC.

The next 3 membrane-spanning stretches (helical) occupy residues 1-21 (MTPTYMNIMLAFTISLLGMLT), 27-47 (VASLLCLEGMMMSLFIMATLI), and 61-81 (IILLVFAACETAVGLALLISI).

The protein belongs to the complex I subunit 4L family. As to quaternary structure, core subunit of respiratory chain NADH dehydrogenase (Complex I) which is composed of 45 different subunits.

It localises to the mitochondrion inner membrane. The enzyme catalyses a ubiquinone + NADH + 5 H(+)(in) = a ubiquinol + NAD(+) + 4 H(+)(out). In terms of biological role, core subunit of the mitochondrial membrane respiratory chain NADH dehydrogenase (Complex I) which catalyzes electron transfer from NADH through the respiratory chain, using ubiquinone as an electron acceptor. Part of the enzyme membrane arm which is embedded in the lipid bilayer and involved in proton translocation. The chain is NADH-ubiquinone oxidoreductase chain 4L (MT-ND4L) from Macaca fascicularis (Crab-eating macaque).